The chain runs to 600 residues: DDB1- and CUL4-associated factor 8-like protein 1 (600 aa).

Positions 1–122 (MSHQEGSTGG…EEEQPRMCPR (122 aa)) are disordered. Acidic residues-rich tracts occupy residues 74-83 (SSSEDVELES) and 96-115 (EETEREEEEEEMEEEGEEEE). WD repeat units follow at residues 194–233 (SHAGSVSTIHFNQRGTRLASSGDDLRVIVWDWVRQKPVLN), 237–278 (GHDI…YCEN), 284–324 (KHRG…PASK), 332–372 (DKKV…KKEN), 388–427 (DFPTNITCVVYSHDGTELLASYNDEDIYLFNSSLSDGAQY), 435–475 (RNND…IIQF), and 479–518 (DRGDIVNCLEPHPYLPVLATSGLDQHVRIWTPTAKTATEL). A disordered region spans residues 562-600 (PGWRDHGAEFPDEEELDESSSTSDTSEEEGQDRVQCIPS).

It belongs to the WD repeat DCAF8 family.

In Homo sapiens (Human), this protein is DDB1- and CUL4-associated factor 8-like protein 1 (DCAF8L1).